A 319-amino-acid chain; its full sequence is Pantothenate kinase (319 aa).

Residue 96-103 (GSVAVGKS) participates in ATP binding.

This sequence belongs to the prokaryotic pantothenate kinase family.

It localises to the cytoplasm. It catalyses the reaction (R)-pantothenate + ATP = (R)-4'-phosphopantothenate + ADP + H(+). It participates in cofactor biosynthesis; coenzyme A biosynthesis; CoA from (R)-pantothenate: step 1/5. In Bacillus subtilis (strain 168), this protein is Pantothenate kinase (coaA).